Here is a 459-residue protein sequence, read N- to C-terminus: Type I restriction enzyme HindI specificity subunit (459 aa).

Belongs to the type-I restriction system S methylase family. The type I restriction/modification system is composed of three polypeptides R, M and S; the restriction enzyme has stoichiometry R(2)M(2)S(1) while the methyltransferase is M(2)S(1).

The specificity (S) subunit of a type I restriction enzyme; this subunit dictates DNA sequence specificity. The M and S subunits together form a methyltransferase (MTase) that methylates adenosines in the sequence 5'-RAACN(5)TAG-3'. Methylation protects against cleavage by HindI. In the presence of the R subunit the complex can also act as an endonuclease, binding to the same target sequence but cutting the DNA some distance from this site. Whether the DNA is cut or modified depends on the methylation state of the target sequence. When the target site is unmodified, the DNA is cut. When the target site is hemimethylated, the complex acts as a maintenance MTase modifying the DNA so that both strands become methylated. After locating a non-methylated recognition site, the enzyme complex serves as a molecular motor that translocates DNA in an ATP-dependent manner until a collision occurs that triggers cleavage. The polypeptide is Type I restriction enzyme HindI specificity subunit (Haemophilus influenzae (strain ATCC 51907 / DSM 11121 / KW20 / Rd)).